The sequence spans 37 residues: GFGCPNDYPCHRHCKSIPGRXGGYCGGXHRLRCTCYR.

3 disulfide bridges follow: Cys-4/Cys-25, Cys-10/Cys-33, and Cys-14/Cys-35.

The protein resides in the secreted. Has antibacterial activity against M.luteus and E.coli. In Mytilus edulis (Blue mussel), this protein is Defensin-A.